Reading from the N-terminus, the 607-residue chain is UvrABC system protein C (607 aa).

Residues 16–94 (GRPGVYRMFD…IKEWRPPYNI (79 aa)) form the GIY-YIG domain. The region spanning 203 to 238 (NALTDELSAGMEQAASTLDFEKAAELRDQISLLRRV) is the UVR domain.

It belongs to the UvrC family. As to quaternary structure, interacts with UvrB in an incision complex.

Its subcellular location is the cytoplasm. Functionally, the UvrABC repair system catalyzes the recognition and processing of DNA lesions. UvrC both incises the 5' and 3' sides of the lesion. The N-terminal half is responsible for the 3' incision and the C-terminal half is responsible for the 5' incision. The chain is UvrABC system protein C from Pseudomonas protegens (strain DSM 19095 / LMG 27888 / CFBP 6595 / CHA0).